A 127-amino-acid chain; its full sequence is MGLQNMTLRRFTLSMSALLLLCALLWLWAALEQQESSLAIRPVTPNTSMPDGFSIWHHLDANGIRFKSITPQDDALVIKFESSEQSAAAKEVLDRSLPHGYVIALQEDDAIAPQWLSRLRDAPHRLG.

Over 1-10 (MGLQNMTLRR) the chain is Cytoplasmic. A helical transmembrane segment spans residues 11–31 (FTLSMSALLLLCALLWLWAAL). Residues 32–127 (EQQESSLAIR…RLRDAPHRLG (96 aa)) lie on the Periplasmic side of the membrane.

This sequence belongs to the MzrA family. In terms of assembly, interacts with EnvZ.

Its subcellular location is the cell inner membrane. In terms of biological role, modulates the activity of the EnvZ/OmpR two-component regulatory system, probably by directly modulating EnvZ enzymatic activity and increasing stability of phosphorylated OmpR. The chain is Modulator protein MzrA from Enterobacter lignolyticus (strain SCF1).